Here is a 664-residue protein sequence, read N- to C-terminus: Acid beta-fructofuranosidase 4, vacuolar (664 aa).

Over 1–43 the chain is Cytoplasmic; the sequence is MASSDALLPISAREEEPLCPYTRLPMADPNQETHGPRRRRPFK. The propeptide at 1–108 is removed in mature form; that stretch reads MASSDALLPI…WKLSGDRNTP (108 aa). 2 short sequence motifs (critical for endoplasmic reticulum export) span residues 7–8 and 9–10; these read LL and PI. Residues 14–16 carry the Critical for trafficking from the trans-Golgi network to the prevacuolar compartment and from the prevacuolar compartment to the central vacuole motif; that stretch reads EEE. A helical; Signal-anchor for type II membrane protein membrane pass occupies residues 44–64; sequence GLLAVSFGLLFIAFYVALIAT. The Lumenal segment spans residues 65–664; that stretch reads HDGSRSNDEG…DEAVRALSRT (600 aa). Asn-113 carries an N-linked (GlcNAc...) asparagine glycan. Substrate contacts are provided by residues 132-135, Gln-151, Trp-159, 194-195, and 258-259; these read WMND, WT, and RD. Asp-135 is an active-site residue. A glycan (N-linked (GlcNAc...) (complex) asparagine) is linked at Asn-280. 2 residues coordinate substrate: Glu-313 and Asp-346. Residues Asn-362 and Asn-498 are each glycosylated (N-linked (GlcNAc...) asparagine). Cys-510 and Cys-558 are oxidised to a cystine.

This sequence belongs to the glycosyl hydrolase 32 family. As to quaternary structure, may be present in two forms, a 70 kDa monomer and a heterodimer of the 30 kDa and 38 kDa subunits. The ratio of the levels of the two forms within cells appears to be regulated developmentally. Mostly expressed in stems, roots and flowers, and, to a lower extent, in mature leaves.

The protein localises to the vacuole. The protein resides in the endoplasmic reticulum membrane. Its subcellular location is the golgi apparatus membrane. It is found in the golgi apparatus. It localises to the trans-Golgi network membrane. The protein localises to the prevacuolar compartment membrane. The protein resides in the vacuole membrane. Its subcellular location is the vacuole lumen. It catalyses the reaction Hydrolysis of terminal non-reducing beta-D-fructofuranoside residues in beta-D-fructofuranosides.. It functions in the pathway glycan biosynthesis; sucrose metabolism. With respect to regulation, inhibited by C/VIF1 and C/VIF2. Functionally, possible role in the continued mobilization of sucrose to sink organs. Regulates root elongation. The polypeptide is Acid beta-fructofuranosidase 4, vacuolar (Arabidopsis thaliana (Mouse-ear cress)).